The sequence spans 296 residues: Protoheme IX farnesyltransferase (296 aa).

The next 9 helical transmembrane spans lie at 27 to 47 (IMYLVVFTASTGMIMAPGTIH), 48 to 68 (PLIGLVSALCIAMGSGAAGAL), 98 to 118 (ALECGLALSLLSVFIMSLTVN), 120 to 140 (VSAILLACSIAFYAVVYTMVL), 148 to 168 (IVIGGIAGAFPPVIGWTSVTG), 175 to 195 (LLLFMIIFLWTPPHFWALSLL), 219 to 239 (HIMGYSLLLFIVALLPGLYVA), 242 to 262 (VLYEIIATSLGAVFLTHAYCL), and 274 to 294 (CMGLFSFSIYYLFLIFSAIAL).

This sequence belongs to the UbiA prenyltransferase family. Protoheme IX farnesyltransferase subfamily.

The protein resides in the cell inner membrane. The catalysed reaction is heme b + (2E,6E)-farnesyl diphosphate + H2O = Fe(II)-heme o + diphosphate. It functions in the pathway porphyrin-containing compound metabolism; heme O biosynthesis; heme O from protoheme: step 1/1. Converts heme B (protoheme IX) to heme O by substitution of the vinyl group on carbon 2 of heme B porphyrin ring with a hydroxyethyl farnesyl side group. This chain is Protoheme IX farnesyltransferase, found in Anaplasma phagocytophilum (strain HZ).